We begin with the raw amino-acid sequence, 149 residues long: Nucleoside diphosphate kinase (149 aa).

ATP-binding residues include K9, F57, R85, T91, R102, and N112. The active-site Pros-phosphohistidine intermediate is the H115.

Belongs to the NDK family. Homotetramer. It depends on Mg(2+) as a cofactor.

It localises to the cytoplasm. The enzyme catalyses a 2'-deoxyribonucleoside 5'-diphosphate + ATP = a 2'-deoxyribonucleoside 5'-triphosphate + ADP. It catalyses the reaction a ribonucleoside 5'-diphosphate + ATP = a ribonucleoside 5'-triphosphate + ADP. In terms of biological role, major role in the synthesis of nucleoside triphosphates other than ATP. The ATP gamma phosphate is transferred to the NDP beta phosphate via a ping-pong mechanism, using a phosphorylated active-site intermediate. The protein is Nucleoside diphosphate kinase of Crocosphaera subtropica (strain ATCC 51142 / BH68) (Cyanothece sp. (strain ATCC 51142)).